The primary structure comprises 124 residues: MAASAVSYKERQFLAVIGDEDSVTGLLLAGIGHVTDGPDAQRNFLVVDSKTETSAIEKAFQNFTQERKDIAVLLINQHIAERIRHSVDSFADPFPAVLEIPSKDHPYDPEKDSVLKRVRRLFGE.

It belongs to the V-ATPase F subunit family. In terms of assembly, V-ATPase is a heteromultimeric enzyme composed of a peripheral catalytic V1 complex (components A to H) attached to an integral membrane V0 proton pore complex (components: a, c, c', c'', d, e, f and VOA1).

It is found in the vacuole membrane. In terms of biological role, subunit of the V1 complex of vacuolar(H+)-ATPase (V-ATPase), a multisubunit enzyme composed of a peripheral complex (V1) that hydrolyzes ATP and a membrane integral complex (V0) that translocates protons. V-ATPase is responsible for acidifying and maintaining the pH of intracellular compartments. The sequence is that of V-type proton ATPase subunit F (vma7) from Neosartorya fischeri (strain ATCC 1020 / DSM 3700 / CBS 544.65 / FGSC A1164 / JCM 1740 / NRRL 181 / WB 181) (Aspergillus fischerianus).